Consider the following 574-residue polypeptide: E3 ubiquitin-protein ligase TRIM23 (574 aa).

The RING-type; degenerate zinc-finger motif lies at 31–76 (CGVCEDVFSLQGDKVPRLLLCGHTVCHDCLTRLPLHGRAIRCPFDR). The B box-type; degenerate zinc finger occupies 122-168 (ESIIRCDEDEAHLASVYCTVCATHLCSECSQVTHSTKTLAKHRRVPL). Residues 352–379 (RVVLAKQEITRLLETLQKQQQQFTEVAD) adopt a coiled-coil conformation. The segment at 390-574 (TFTKDNRVHI…LVAAGVLDVA (185 aa)) is ARF-like. Residues 411–418 (GLDGAGKT), 454–458 (DVGGK), and 513–516 (NKQD) contribute to the GTP site.

The protein in the C-terminal section; belongs to the small GTPase superfamily. Arf family. As to quaternary structure, homodimer. Interacts with PSCD1. Interacts with UBE2D2. Interacts with TBK1 (via N-terminal kinase domain) and p62/SQSTM1. (Microbial infection) Interacts with human cytomegalovirus protein UL144; this interaction might cause autoubiquitination of TRAF6, leading to NF-kappa-B activation.

The protein resides in the cytoplasm. The protein localises to the endomembrane system. It localises to the golgi apparatus membrane. It is found in the lysosome membrane. It catalyses the reaction S-ubiquitinyl-[E2 ubiquitin-conjugating enzyme]-L-cysteine + [acceptor protein]-L-lysine = [E2 ubiquitin-conjugating enzyme]-L-cysteine + N(6)-ubiquitinyl-[acceptor protein]-L-lysine.. The protein operates within protein modification; protein ubiquitination. Its function is as follows. Acts as an E3 ubiquitin-protein ligase. Plays an essential role in autophagy activation during viral infection. Mechanistically, activates TANK-binding kinase 1/TBK1 by facilitating its dimerization and ability to phosphorylate the selective autophagy receptor SQSTM1. In order to achieve this function, TRIM23 mediates 'Lys-27'-linked auto-ubiquitination of its ADP-ribosylation factor (ARF) domain to induce its GTPase activity and its recruitment to autophagosomes. (Microbial infection) Mediates TRAF6 auto-ubiquitination in the presence of human cytomegalovirus protein UL144, resulting in the virally controlled activation of NF-kappa-B stimulation at early times of HCMV infection. This Homo sapiens (Human) protein is E3 ubiquitin-protein ligase TRIM23 (TRIM23).